Reading from the N-terminus, the 499-residue chain is Cysteine--tRNA ligase (499 aa).

Cys-29 is a Zn(2+) binding site. Positions 31 to 41 match the 'HIGH' region motif; sequence VTVYDLCHLGH. Cys-213, His-238, and Glu-242 together coordinate Zn(2+). Positions 270–274 match the 'KMSKS' region motif; that stretch reads KMSKS. Residue Lys-273 coordinates ATP.

Belongs to the class-I aminoacyl-tRNA synthetase family. In terms of assembly, monomer. It depends on Zn(2+) as a cofactor.

The protein resides in the cytoplasm. It carries out the reaction tRNA(Cys) + L-cysteine + ATP = L-cysteinyl-tRNA(Cys) + AMP + diphosphate. The polypeptide is Cysteine--tRNA ligase (Prochlorococcus marinus (strain MIT 9303)).